The sequence spans 92 residues: Acyl-CoA-binding domain-containing protein 6 (92 aa).

Positions 3 to 88 constitute an ACB domain; that stretch reads LKEEFEEHAE…VKQLLEVAAS (86 aa). An acyl-CoA is bound by residues 30 to 34, Lys52, Lys56, and Tyr75; that span reads YGLYK.

Belongs to the ACBP family. As to quaternary structure, interacts with PDLP8. As to expression, mostly expressed in seeds, stems, and siliques, and, to a lower extent, in leaves, flowers, and roots (at protein level). Highly expressed in root and shoot phloem companion cells.

It localises to the cytoplasm. It is found in the cell membrane. In terms of biological role, binds medium- and long-chain acyl-CoA esters with very high affinity. May function as an intracellular carrier of acyl-CoA esters. Confers resistance to cold and freezing. Interacts with phosphatidylcholine and derivatives, but not phosphatidic acid and lysophosphatidylcholine. May be involved in phospholipid metabolism. The protein is Acyl-CoA-binding domain-containing protein 6 (ACBP6) of Arabidopsis thaliana (Mouse-ear cress).